The chain runs to 389 residues: Putative zinc finger CCCH domain-containing protein 10 (389 aa).

Over residues 1–11 (MANVSFTFDSQ) the composition is skewed to polar residues. The interval 1–110 (MANVSFTFDS…QDRRGSESRM (110 aa)) is disordered. Basic and acidic residues-rich tracts occupy residues 12–52 (EQNK…RVSE) and 86–110 (RSHETESRLWQRARTQDRRGSESRM). 2 C3H1-type zinc fingers span residues 131–157 (RPGEDNCLFYMKNHLCEWGSECCYNHP) and 158–190 (PLQEIPCRIGKKLDCKAGACKRGSNCPFNHPKE). The segment at 183 to 296 (CPFNHPKERD…ATATGKVSGK (114 aa)) is disordered. Basic and acidic residues-rich tracts occupy residues 204-243 (PDLRRNDSGRRYNTESRSWPENKEKEVGQFRDHQDSKEDA) and 251-284 (RPRDVEMRKRSRSPDFRAKTETKEHREAEERSSR).

This is Putative zinc finger CCCH domain-containing protein 10 from Arabidopsis thaliana (Mouse-ear cress).